The primary structure comprises 234 residues: DNA repair protein RecO (234 aa).

Belongs to the RecO family.

In terms of biological role, involved in DNA repair and RecF pathway recombination. The chain is DNA repair protein RecO from Halorhodospira halophila (strain DSM 244 / SL1) (Ectothiorhodospira halophila (strain DSM 244 / SL1)).